We begin with the raw amino-acid sequence, 605 residues long: Adaptin medium chain homolog APM2 (605 aa).

Residues 150–196 (EEWSPGEESSSSSGSDSDSEYSNTNKRKDKKKKRKKKKGTKGKSVGK) are disordered. The segment covering 155–171 (GEESSSSSGSDSDSEYS) has biased composition (low complexity). A compositionally biased stretch (basic residues) spans 174–196 (NKRKDKKKKRKKKKGTKGKSVGK). Residues 269 to 604 (KNEFFLDVIE…TVSDEEYAYI (336 aa)) form the MHD domain.

It belongs to the adaptor complexes medium subunit family. Component of the AP-1R complex composed of at least APM2, APL4 and APS1. Interacts with MIL1. Interacts with APL2.

The protein resides in the golgi apparatus membrane. The protein localises to the early endosome membrane. It is found in the cytoplasmic vesicle. It localises to the clathrin-coated vesicle membrane. In terms of biological role, component of the AP-1-related (AP-1R) complex, an adapter protein complex that mediates of cargo protein sorting in clathrin-coated vesicles. AP-1R has a specific role in SNARE SNC1 sorting. In contrast to the APM1-containing AP-1 complex, AP-1R is incapable of sorting CHS3. In Saccharomyces cerevisiae (strain ATCC 204508 / S288c) (Baker's yeast), this protein is Adaptin medium chain homolog APM2 (APM2).